Consider the following 153-residue polypeptide: UPF0178 protein Ccel_2994 (153 aa).

Belongs to the UPF0178 family.

This Ruminiclostridium cellulolyticum (strain ATCC 35319 / DSM 5812 / JCM 6584 / H10) (Clostridium cellulolyticum) protein is UPF0178 protein Ccel_2994.